The sequence spans 23 residues: Unknown protein 1 (23 aa).

The protein is Unknown protein 1 of Coniferiporia sulphurascens (Laminated root rot fungus).